Reading from the N-terminus, the 139-residue chain is Large ribosomal subunit protein bL17 (139 aa).

It belongs to the bacterial ribosomal protein bL17 family. Part of the 50S ribosomal subunit. Contacts protein L32.

This is Large ribosomal subunit protein bL17 from Azorhizobium caulinodans (strain ATCC 43989 / DSM 5975 / JCM 20966 / LMG 6465 / NBRC 14845 / NCIMB 13405 / ORS 571).